Consider the following 67-residue polypeptide: MPKLKTKSGVKKRFKLTASGKVKHGVAGKRHRLISHNAKYIRQNRGTEVISDADAKVIKKWAPYGLN.

Belongs to the bacterial ribosomal protein bL35 family.

The sequence is that of Large ribosomal subunit protein bL35 from Novosphingobium aromaticivorans (strain ATCC 700278 / DSM 12444 / CCUG 56034 / CIP 105152 / NBRC 16084 / F199).